The primary structure comprises 1325 residues: Cellulose synthase 1 operon protein C (1325 aa).

The first 30 residues, 1–30 (MNRRYVFSLSAGLLASSCMGAIMPVPVARA), serve as a signal peptide directing secretion. TPR repeat units follow at residues 50 to 83 (RQIL…APDA), 85 to 117 (DVLE…APGS), 292 to 325 (AGLA…NSHD), 326 to 359 (ADSL…DPKT), 406 to 439 (TGAT…DPNN), 558 to 591 (NDAA…KEDL), 702 to 735 (MGIA…DPEA), and 737 to 769 (SPKL…NPQD). The segment at 838–886 (VEGSRSASGPAATEEDALAPPSSNPFRHHGYGRQTELGAPVTGGSYSME) is disordered.

Belongs to the AcsC/BcsC family.

The protein localises to the cell outer membrane. It functions in the pathway glycan metabolism; bacterial cellulose biosynthesis. Functionally, required for maximal bacterial cellulose synthesis. It may be involved in the formation of a membrane complex for extrusion of the cellulose product. In Komagataeibacter xylinus (Gluconacetobacter xylinus), this protein is Cellulose synthase 1 operon protein C (bcsCI).